Here is a 132-residue protein sequence, read N- to C-terminus: ATP synthase epsilon chain, cyanelle (132 aa).

This sequence belongs to the ATPase epsilon chain family. As to quaternary structure, F-type ATPases have 2 components, CF(1) - the catalytic core - and CF(0) - the membrane proton channel. CF(1) has five subunits: alpha(3), beta(3), gamma(1), delta(1), epsilon(1). CF(0) has three main subunits: a, b and c.

The protein resides in the plastid. The protein localises to the cyanelle thylakoid membrane. In terms of biological role, produces ATP from ADP in the presence of a proton gradient across the membrane. This Cyanophora paradoxa protein is ATP synthase epsilon chain, cyanelle.